A 617-amino-acid polypeptide reads, in one-letter code: Neurosecretory protein VGF (617 aa).

Positions 1–23 (MKTFTLPASVLFCFLLLIRGLGA) are cleaved as a signal peptide. Disordered stretches follow at residues 29-75 (SDVY…GELF), 94-113 (PASP…EEAA), 121-157 (VRSQ…DRSE), and 169-192 (LRDF…ETRT). Residues 48–64 (AVSRPKDDSVPEVRAAR) are compositionally biased toward basic and acidic residues. The span at 148–157 (NDPEADDRSE) shows a compositional bias: acidic residues. Residue glutamine 180 is modified to Pyrrolidone carboxylic acid. Low complexity predominate over residues 182-192 (ETAAAETETRT). The residue at position 313 (glutamine 313) is a Pyrrolidone carboxylic acid. The interval 348–603 (DLGGRGLQET…AEERRLQEQE (256 aa)) is disordered. Residues 378–397 (EDEVGEEDEEAAEAEAEAEE) are compositionally biased toward acidic residues. Basic and acidic residues predominate over residues 418-436 (AEDKRSQEEAPGHRRKDAE). Serine 423 carries the phosphoserine modification. The segment covering 437 to 452 (GTEEGGEEDDDDEEMD) has biased composition (acidic residues). The span at 491 to 501 (PPEPVPPPRAA) shows a compositional bias: pro residues. Basic and acidic residues predominate over residues 577–601 (HHPDLEAQARRAQEEADAEERRLQE).

As to quaternary structure, interacts with HSPA8 on cell membrane. Interacts with C3AR1. Interacts with C1QBP. Multiple peptides are derived from VGF, with activities in synaptic plasticity, antidepression, penile erection, autonomic activation, and increases in energy expenditure. As to expression, central and peripheral nervous systems, synthesized exclusively in neuronal and neuroendocrine cells. VGF and several of the derived peptides are present in the brain.

It localises to the secreted. Its subcellular location is the cytoplasmic vesicle. The protein localises to the secretory vesicle. Its function is as follows. Secreted polyprotein that is packaged and proteolytically processed by prohormone convertases PCSK1 and PCSK2 in a cell-type-specific manner. VGF and peptides derived from its processing play many roles in neurogenesis and neuroplasticity associated with learning, memory, depression and chronic pain. Functionally, plays a role in the control of body fluid homeostasis by regulating vasopressin release. Suppresses presynaptic glutamatergic neurons connected to vasopressin neurons. Plays a role in the control of body fluid homeostasis by regulating vasopressin release. Activates GABAergic interneurons which are inhibitory neurons of the nervous system and thereby suppresses presynaptic glutamatergic neurons. Also stimulates feeding behavior in an orexin-dependent manner in the hypothalamus. Functions as a positive regulator for the activation of orexin neurons resulting in elevated gastric acid secretion and gastric emptying. In terms of biological role, secreted multifunctional neuropeptide that binds to different cell receptors and thereby plays multiple physiological roles including modulation of energy expenditure, pain, response to stress, gastric regulation, glucose homeostasis as well as lipolysis. Activates the G-protein-coupled receptor C3AR1 via a folding-upon-binding mechanism leading to enhanced lipolysis in adipocytes. Interacts with C1QBP receptor in macrophages and microglia causing increased levels of intracellular calcium and hypersensitivity. Its function is as follows. Plays a role in the regulation of memory formation and depression-related behaviors potentially by influencing synaptic plasticity and neurogenesis. Induces acute and transient activation of the NTRK2/TRKB receptor and subsequent CREB phosphorylation. Also induces insulin secretion in insulinoma cells by increasing intracellular calcium mobilization. This Rattus norvegicus (Rat) protein is Neurosecretory protein VGF (Vgf).